The sequence spans 202 residues: Protein THEM6 (202 aa).

Residues 1-24 (MLLWFLSGSLLLFGTFDVWYFLRG) form the signal peptide.

Belongs to the THEM6 family.

The protein resides in the secreted. The polypeptide is Protein THEM6 (them6) (Danio rerio (Zebrafish)).